We begin with the raw amino-acid sequence, 204 residues long: MGRYIGPLTKVSRRLGVFVGGDIESFQKRNFPPGQHGRTQGRKKLSDYGVRLQEKQKLRFLYGGIREGQFKRYFERASKAAGNTGTVLLQLLERRLDNVVYRLGFAKTRLQARQLVKHGHFLVNGKKVDIPSYELDKGDIIEVREKSKKLEVFKENLESRDPRSVPRWLEIDKDNFRGKVVEIPEEIELEIPVNVQYIIEYYSM.

The S4 RNA-binding domain maps to 94–157 (RRLDNVVYRL…KKLEVFKENL (64 aa)).

This sequence belongs to the universal ribosomal protein uS4 family. Part of the 30S ribosomal subunit. Contacts protein S5. The interaction surface between S4 and S5 is involved in control of translational fidelity.

In terms of biological role, one of the primary rRNA binding proteins, it binds directly to 16S rRNA where it nucleates assembly of the body of the 30S subunit. Its function is as follows. With S5 and S12 plays an important role in translational accuracy. The polypeptide is Small ribosomal subunit protein uS4 (Sulfurihydrogenibium sp. (strain YO3AOP1)).